We begin with the raw amino-acid sequence, 355 residues long: Chorismate synthase (355 aa).

NADP(+) is bound at residue arginine 46. Residues arginine 123–serine 125, asparagine 233–glycine 234, glycine 273, lysine 288–serine 292, and arginine 314 each bind FMN.

The protein belongs to the chorismate synthase family. Homotetramer. The cofactor is FMNH2.

It catalyses the reaction 5-O-(1-carboxyvinyl)-3-phosphoshikimate = chorismate + phosphate. It functions in the pathway metabolic intermediate biosynthesis; chorismate biosynthesis; chorismate from D-erythrose 4-phosphate and phosphoenolpyruvate: step 7/7. Its function is as follows. Catalyzes the anti-1,4-elimination of the C-3 phosphate and the C-6 proR hydrogen from 5-enolpyruvylshikimate-3-phosphate (EPSP) to yield chorismate, which is the branch point compound that serves as the starting substrate for the three terminal pathways of aromatic amino acid biosynthesis. This reaction introduces a second double bond into the aromatic ring system. This Campylobacter concisus (strain 13826) protein is Chorismate synthase.